A 339-amino-acid polypeptide reads, in one-letter code: Chromo domain-containing protein cec-3 (339 aa).

The disordered stretch occupies residues 1 to 21 (MSNEGSREESREPEAREGKSD). The region spanning 24 to 84 (FEVEKILAHK…KLKVTDKTEL (61 aa)) is the Chromo domain. Basic residues predominate over residues 91–105 (QIKKNKSQKSKKRSK). Disordered regions lie at residues 91–199 (QIKK…APLS) and 215–272 (EEKA…QRTL). 2 stretches are compositionally biased toward basic and acidic residues: residues 106-117 (TVSDHESNHDSD) and 171-183 (AAME…RNWL). The segment covering 184–193 (DEESSDDEAE) has biased composition (acidic residues). Residues 230–241 (KPREVVIKKDPS) show a composition bias toward basic and acidic residues. A compositionally biased stretch (low complexity) spans 242 to 251 (ESPVASASSV).

As to expression, expressed in every cell of the embryo (at protein level). In adults, expressed predominantly in the head region and the germline.

It localises to the chromosome. The protein localises to the nucleus. Its function is as follows. Specifically recognizes and binds methylated 'Lys-9' of histone H3 (H3K9me), with highest preference for trimethylated 'Lys-9' (H3K9me3) followed by dimethylated 'Lys-9' (H3K9me2) followed by monomethylated 'Lys-9' (H3K9me1). Plays a role in maintaining correct unc-4 expression in the VC motor neurons where unc-4 is expressed in the vulval but not in the non-vulval VC neurons. This is Chromo domain-containing protein cec-3 (cec-3) from Caenorhabditis elegans.